The sequence spans 422 residues: Phosphoribosylamine--glycine ligase (422 aa).

Positions 107–312 (KEVMAAAGVR…LGQLLYAAGT (206 aa)) constitute an ATP-grasp domain. An ATP-binding site is contributed by 138-193 (PPVGDLSWVVKDDRLAAGKGVVVTSDRDVARTHAAGLLEAGHPVLLESYLDGPEVS). 2 residues coordinate Mg(2+): Glu282 and Asn284.

This sequence belongs to the GARS family. It depends on Mg(2+) as a cofactor. The cofactor is Mn(2+).

It carries out the reaction 5-phospho-beta-D-ribosylamine + glycine + ATP = N(1)-(5-phospho-beta-D-ribosyl)glycinamide + ADP + phosphate + H(+). It participates in purine metabolism; IMP biosynthesis via de novo pathway; N(1)-(5-phospho-D-ribosyl)glycinamide from 5-phospho-alpha-D-ribose 1-diphosphate: step 2/2. This Mycobacterium leprae (strain TN) protein is Phosphoribosylamine--glycine ligase.